A 345-amino-acid polypeptide reads, in one-letter code: Adenosine kinase 2 (345 aa).

Asp300 is an active-site residue.

It belongs to the carbohydrate kinase PfkB family. In terms of assembly, interacts with the begomovirus AL2 protein and the curtovirus L2 protein. Interacts with KIN11. Requires Mg(2+) as cofactor. Post-translationally, phosphorylated by KIN11. In terms of tissue distribution, widely expressed.

The protein resides in the cytoplasm. The enzyme catalyses adenosine + ATP = AMP + ADP + H(+). The protein operates within purine metabolism; AMP biosynthesis via salvage pathway; AMP from adenosine: step 1/1. Inactivated by the begomovirus AL2 protein or the curtovirus L2 protein. Its function is as follows. ATP dependent phosphorylation of adenosine and other related nucleoside analogs to monophosphate derivatives. Essential to sustain methyl recycling. In Arabidopsis thaliana (Mouse-ear cress), this protein is Adenosine kinase 2.